A 214-amino-acid chain; its full sequence is Probable transaldolase (214 aa).

Residue K83 is the Schiff-base intermediate with substrate of the active site.

This sequence belongs to the transaldolase family. Type 3B subfamily.

The protein resides in the cytoplasm. The catalysed reaction is D-sedoheptulose 7-phosphate + D-glyceraldehyde 3-phosphate = D-erythrose 4-phosphate + beta-D-fructose 6-phosphate. Its pathway is carbohydrate degradation; pentose phosphate pathway; D-glyceraldehyde 3-phosphate and beta-D-fructose 6-phosphate from D-ribose 5-phosphate and D-xylulose 5-phosphate (non-oxidative stage): step 2/3. Functionally, transaldolase is important for the balance of metabolites in the pentose-phosphate pathway. In Streptococcus pyogenes serotype M1, this protein is Probable transaldolase (tal).